Here is a 161-residue protein sequence, read N- to C-terminus: MNDGFADDELSLPKATVQKMVSDILPVDLTFTKEARDLLIECCVEFIHLVSSEANEICEKEAKKTIAAEHIIKALENLEFKEYIAEALEVAAEHKEQQKNREKKSSKFEQSGVSRDELLRQQEELLSRARERFKNQNIAHDNHTTTAIPVPTASETETKEN.

Residues 11–75 enclose the Histone-fold domain; it reads SLPKATVQKM…IAAEHIIKAL (65 aa). Over residues 93–107 the composition is skewed to basic and acidic residues; it reads EHKEQQKNREKKSSK. Disordered regions lie at residues 93–116 and 130–161; these read EHKEQQKNREKKSSKFEQSGVSRD and RERFKNQNIAHDNHTTTAIPVPTASETETKEN. Residues 135–147 show a composition bias toward polar residues; the sequence is NQNIAHDNHTTTA.

This sequence belongs to the NC2 beta/DR1 family.

It localises to the cytoplasm. Its subcellular location is the nucleus. The protein is Negative cofactor 2 complex subunit beta (ncb2) of Schizosaccharomyces pombe (strain 972 / ATCC 24843) (Fission yeast).